Consider the following 226-residue polypeptide: Ribonuclease 3 (226 aa).

The 123-residue stretch at 6 to 128 (INKLQRKLGY…LIGGVFLDSD (123 aa)) folds into the RNase III domain. Residue E41 coordinates Mg(2+). D45 is a catalytic residue. Positions 114 and 117 each coordinate Mg(2+). E117 is a catalytic residue. The DRBM domain maps to 155-225 (DPKTRLQEFL…AEQALIKLGI (71 aa)).

This sequence belongs to the ribonuclease III family. As to quaternary structure, homodimer. The cofactor is Mg(2+).

Its subcellular location is the cytoplasm. It catalyses the reaction Endonucleolytic cleavage to 5'-phosphomonoester.. In terms of biological role, digests double-stranded RNA. Involved in the processing of primary rRNA transcript to yield the immediate precursors to the large and small rRNAs (23S and 16S). Processes some mRNAs, and tRNAs when they are encoded in the rRNA operon. Processes pre-crRNA and tracrRNA of type II CRISPR loci if present in the organism. This chain is Ribonuclease 3, found in Erwinia tasmaniensis (strain DSM 17950 / CFBP 7177 / CIP 109463 / NCPPB 4357 / Et1/99).